Consider the following 277-residue polypeptide: PTS system sorbose-specific EIIC component (277 aa).

5 helical membrane passes run 1-21, 92-112, 133-153, 177-197, and 219-239; these read MAIS…VGMG, IQKG…LTVL, FTAI…RVSI, VITG…YAMI, and YLKL…IVYV. A PTS EIIC type-4 domain is found at 3–237; that stretch reads ISTIQIILIF…GAVGLIFAIV (235 aa).

Its subcellular location is the cell membrane. Functionally, the phosphoenolpyruvate-dependent sugar phosphotransferase system (PTS), a major carbohydrate active transport system, catalyzes the phosphorylation of incoming sugar substrates concomitant with their translocation across the cell membrane. The enzyme II SorABCD PTS system is involved in L-sorbose transport. This is PTS system sorbose-specific EIIC component from Lacticaseibacillus casei (Lactobacillus casei).